Here is a 428-residue protein sequence, read N- to C-terminus: L-fucose-proton symporter (428 aa).

12 helical membrane-spanning segments follow: residues 10–30, 51–71, 78–98, 100–120, 147–167, 204–224, 250–270, 288–308, 311–331, 339–359, 371–391, and 401–421; these read FIVP…ANDI, LVQL…ALFA, AGIL…WPAA, YEIF…LAFL, FNPL…LTNL, IALG…KMPA, EGVI…TFIV, IIAM…MKYL, EFML…VIFI, CLIL…GIAL, AGLV…GMII, and AVNF…IYGF.

Belongs to the major facilitator superfamily. FHS transporter (TC 2.A.1.7) family.

It localises to the cell inner membrane. It catalyses the reaction L-fucose(in) + H(+)(in) = L-fucose(out) + H(+)(out). Functionally, mediates the uptake of L-fucose across the boundary membrane with the concomitant transport of protons into the cell (symport system). This is L-fucose-proton symporter (fucP) from Haemophilus influenzae (strain ATCC 51907 / DSM 11121 / KW20 / Rd).